A 446-amino-acid chain; its full sequence is MEETIEDPPTSAVLLDHCHFSQVIFSSVEKFYIPGGDVTCHYTFTQHFIPRRKDWIGIFRVGWKTTREYYTFMWVTLPIDLNNKSAKQQEVQFKAYYLPKDDEYYQFCYVDQDGVVRGASIPFQFRPENEEDILVVTTQGEVEEIEQHNKELCKENQELKDNCVSLQKQNSDMQAELQKKQEELETLQSINKKLELKVKEQKDYWETELLQLKEQNQKMSSENEKMGIRVDQLQAQLSTQEKEMEKLVQGDQDKTEQLEQLKKENDHLFLSLTEQRKDQKKLEQTVEQMKQNETTAMKKQQELMDENFDLSKRLSENKIICNALQREKERLEGENDLLKRENSRLLSYMGLDFNSLPYQVPTSDEGGAGQNPGLVYGNPYSGIQESSSPSPLSIKKCPICKADDICDHILEQQQMQPLCLNCPICDKIFPATEKQIFEDHVFCHSL.

Residues 133–136 (ILVV) carry the CLIR motif. The stretch at 137–349 (TTQGEVEEIE…RENSRLLSYM (213 aa)) forms a coiled coil. The LIR-like signature appears at 203 to 206 (DYWE). The tract at residues 371–381 (NPGLVYGNPYS) is interaction with LGALS8. The tract at residues 395–446 (KKCPICKADDICDHILEQQQMQPLCLNCPICDKIFPATEKQIFEDHVFCHSL) is interaction with MYO6. The segment at 419-444 (CLNCPICDKIFPATEKQIFEDHVFCH) adopts a UBZ1-type zinc-finger fold. Zn(2+)-binding residues include Cys422, Cys425, His440, and His444. Ser445 bears the Phosphoserine mark.

The protein belongs to the CALCOCO family. Dimer. Part of a complex consisting of CALCOCO2, TAX1BP1 and MYO6. Interacts with MYO6. Interacts with GEMIN4. Interacts with ATG8 family members MAP1LC3A, MAP1LC3B, GABARAP, GABARAPL1 and GABARAPL2. Interacts with ATG8 family member MAP1LC3C. Interacts with LGALS8. Interacts with TOM1; the interaction is indirect and is mediated by MYO6, which acts as a bridge between TOM1 and CALCOCO2. Interacts with AZI2.

It is found in the cytoplasm. Its subcellular location is the perinuclear region. The protein localises to the cytoskeleton. It localises to the cytoplasmic vesicle. The protein resides in the autophagosome membrane. Functionally, xenophagy-specific receptor required for autophagy-mediated intracellular bacteria degradation. Acts as an effector protein of galectin-sensed membrane damage that restricts the proliferation of infecting pathogens upon entry into the cytosol by targeting LGALS8-associated bacteria for autophagy. Initially orchestrates bacteria targeting to autophagosomes and subsequently ensures pathogen degradation by regulating pathogen-containing autophagosome maturation. Bacteria targeting to autophagosomes relies on its interaction with MAP1LC3A, MAP1LC3B and/or GABARAPL2, whereas regulation of pathogen-containing autophagosome maturation requires the interaction with MAP3LC3C. May play a role in ruffle formation and actin cytoskeleton organization and seems to negatively regulate constitutive secretion. The polypeptide is Calcium-binding and coiled-coil domain-containing protein 2 (Pongo abelii (Sumatran orangutan)).